Here is a 136-residue protein sequence, read N- to C-terminus: Large ribosomal subunit protein uL16 (136 aa).

This sequence belongs to the universal ribosomal protein uL16 family. Part of the 50S ribosomal subunit.

Binds 23S rRNA and is also seen to make contacts with the A and possibly P site tRNAs. The chain is Large ribosomal subunit protein uL16 from Sodalis glossinidius (strain morsitans).